The sequence spans 311 residues: Methionyl-tRNA formyltransferase (311 aa).

110 to 113 (SLLP) serves as a coordination point for (6S)-5,6,7,8-tetrahydrofolate.

This sequence belongs to the Fmt family.

The catalysed reaction is L-methionyl-tRNA(fMet) + (6R)-10-formyltetrahydrofolate = N-formyl-L-methionyl-tRNA(fMet) + (6S)-5,6,7,8-tetrahydrofolate + H(+). Its function is as follows. Attaches a formyl group to the free amino group of methionyl-tRNA(fMet). The formyl group appears to play a dual role in the initiator identity of N-formylmethionyl-tRNA by promoting its recognition by IF2 and preventing the misappropriation of this tRNA by the elongation apparatus. This Streptococcus pyogenes serotype M12 (strain MGAS2096) protein is Methionyl-tRNA formyltransferase.